The following is a 351-amino-acid chain: sn-glycerol-3-phosphate import ATP-binding protein UgpC (351 aa).

Residues 4 to 235 (IVLDNVRKSY…PASTFVATFI (232 aa)) enclose the ABC transporter domain. ATP is bound at residue 37-44 (GPSGCGKS).

It belongs to the ABC transporter superfamily. sn-glycerol-3-phosphate importer (TC 3.A.1.1.3) family. In terms of assembly, the complex is composed of two ATP-binding proteins (UgpC), two transmembrane proteins (UgpA and UgpE) and a solute-binding protein (UgpB).

Its subcellular location is the cell inner membrane. It catalyses the reaction sn-glycerol 3-phosphate(out) + ATP + H2O = sn-glycerol 3-phosphate(in) + ADP + phosphate + H(+). Functionally, part of the ABC transporter complex UgpBAEC involved in sn-glycerol-3-phosphate (G3P) import. Responsible for energy coupling to the transport system. The sequence is that of sn-glycerol-3-phosphate import ATP-binding protein UgpC from Brucella abortus (strain 2308).